The sequence spans 550 residues: Pectinesterase 2.1 (550 aa).

Asn179 carries an N-linked (GlcNAc...) asparagine glycan. Substrate contacts are provided by Thr312 and Gln342. Cys331 and Cys358 are joined by a disulfide. Asp365 serves as the catalytic Proton donor. Asp386 serves as the catalytic Nucleophile. A disulfide bridge connects residues Cys399 and Cys433. 2 residues coordinate substrate: Arg454 and Trp456.

It in the N-terminal section; belongs to the PMEI family. The protein in the C-terminal section; belongs to the pectinesterase family.

It localises to the secreted. The protein resides in the cell wall. The catalysed reaction is [(1-&gt;4)-alpha-D-galacturonosyl methyl ester](n) + n H2O = [(1-&gt;4)-alpha-D-galacturonosyl](n) + n methanol + n H(+). Its pathway is glycan metabolism; pectin degradation; 2-dehydro-3-deoxy-D-gluconate from pectin: step 1/5. Functionally, pectinesterase may play a role in cell wall metabolism during fruit growth and development prior to ripening and may be required for preparing cell walls for softening by polygalacturonase during fruit ripening. This is Pectinesterase 2.1 (PME2.1) from Solanum lycopersicum (Tomato).